We begin with the raw amino-acid sequence, 479 residues long: Anaerobic nitric oxide reductase flavorubredoxin (479 aa).

Positions 30–210 (LRGSSYNSYL…PFSRLVTPKI (181 aa)) are zinc metallo-hydrolase. Residues histidine 79, glutamate 81, aspartate 83, histidine 147, aspartate 166, and histidine 227 each coordinate Fe cation. One can recognise a Flavodoxin-like domain in the interval 254–393 (ITIFYDTMSN…LCRQHGRDIA (140 aa)). Residues 260-264 (TMSNN) and 342-369 (AFGS…EMSL) each bind FMN. The Rubredoxin-like domain occupies 423–474 (GPKMQCSVCQWIYDPALGEPLQDVAPGTPWSDVPDNFLCPECSLGKDVFDVL). Positions 428, 431, 461, and 464 each coordinate Fe cation.

It in the N-terminal section; belongs to the zinc metallo-hydrolase group 3 family. Homotetramer. The cofactor is Fe cation. Requires FMN as cofactor.

It is found in the cytoplasm. It participates in nitrogen metabolism; nitric oxide reduction. Functionally, anaerobic nitric oxide reductase; uses NADH to detoxify nitric oxide (NO), protecting several 4Fe-4S NO-sensitive enzymes. Has at least 2 reductase partners, only one of which (NorW, flavorubredoxin reductase) has been identified. NO probably binds to the di-iron center; electrons enter from the NorW at rubredoxin and are transferred sequentially to the FMN center and the di-iron center. Also able to function as an aerobic oxygen reductase. The protein is Anaerobic nitric oxide reductase flavorubredoxin of Salmonella typhi.